A 317-amino-acid polypeptide reads, in one-letter code: Ribonuclease H2 subunit A (317 aa).

Residues 43–270 form the RNase H type-2 domain; it reads PCCLGVDEAG…AKDMLETKGG (228 aa). The a divalent metal cation site is built by D49, E50, and D166.

Belongs to the RNase HII family. Eukaryotic subfamily. Mn(2+) is required as a cofactor. Mg(2+) serves as cofactor.

It carries out the reaction Endonucleolytic cleavage to 5'-phosphomonoester.. Functionally, endonuclease that specifically degrades the RNA of RNA-DNA hybrids. Participates in DNA replication. The sequence is that of Ribonuclease H2 subunit A (rnh-201) from Neurospora crassa (strain ATCC 24698 / 74-OR23-1A / CBS 708.71 / DSM 1257 / FGSC 987).